A 98-amino-acid chain; its full sequence is Small ribosomal subunit protein bS20 (98 aa).

The segment covering 1–12 has biased composition (basic residues); the sequence is MAPRKPSKKVGP. The segment at 1-31 is disordered; the sequence is MAPRKPSKKVGPQKRPSAEKRVITSKKKQLR.

Belongs to the bacterial ribosomal protein bS20 family.

Functionally, binds directly to 16S ribosomal RNA. In Chlamydia trachomatis serovar A (strain ATCC VR-571B / DSM 19440 / HAR-13), this protein is Small ribosomal subunit protein bS20.